Reading from the N-terminus, the 54-residue chain is Large ribosomal subunit protein bL33 (54 aa).

This sequence belongs to the bacterial ribosomal protein bL33 family.

The chain is Large ribosomal subunit protein bL33 from Xylella fastidiosa (strain M23).